The following is a 462-amino-acid chain: Argininosuccinate lyase (462 aa).

It belongs to the lyase 1 family. Argininosuccinate lyase subfamily.

The protein resides in the cytoplasm. The enzyme catalyses 2-(N(omega)-L-arginino)succinate = fumarate + L-arginine. Its pathway is amino-acid biosynthesis; L-arginine biosynthesis; L-arginine from L-ornithine and carbamoyl phosphate: step 3/3. The polypeptide is Argininosuccinate lyase (Hydrogenovibrio crunogenus (strain DSM 25203 / XCL-2) (Thiomicrospira crunogena)).